Consider the following 631-residue polypeptide: Phosphomethylpyrimidine synthase (631 aa).

Residues Asn239, Met268, Tyr297, His333, 353–355, 394–397, and Glu433 each bind substrate; these read SRG and DGLR. Zn(2+) is bound at residue His437. Tyr460 contacts substrate. His501 contacts Zn(2+). Residues Cys581, Cys584, and Cys589 each contribute to the [4Fe-4S] cluster site.

Belongs to the ThiC family. Homodimer. Requires [4Fe-4S] cluster as cofactor.

The catalysed reaction is 5-amino-1-(5-phospho-beta-D-ribosyl)imidazole + S-adenosyl-L-methionine = 4-amino-2-methyl-5-(phosphooxymethyl)pyrimidine + CO + 5'-deoxyadenosine + formate + L-methionine + 3 H(+). The protein operates within cofactor biosynthesis; thiamine diphosphate biosynthesis. Its function is as follows. Catalyzes the synthesis of the hydroxymethylpyrimidine phosphate (HMP-P) moiety of thiamine from aminoimidazole ribotide (AIR) in a radical S-adenosyl-L-methionine (SAM)-dependent reaction. The chain is Phosphomethylpyrimidine synthase from Escherichia coli O139:H28 (strain E24377A / ETEC).